A 105-amino-acid chain; its full sequence is Urease subunit beta (105 aa).

It belongs to the urease beta subunit family. As to quaternary structure, heterotrimer of UreA (gamma), UreB (beta) and UreC (alpha) subunits. Three heterotrimers associate to form the active enzyme.

It is found in the cytoplasm. It carries out the reaction urea + 2 H2O + H(+) = hydrogencarbonate + 2 NH4(+). Its pathway is nitrogen metabolism; urea degradation; CO(2) and NH(3) from urea (urease route): step 1/1. The sequence is that of Urease subunit beta from Pseudomonas putida (strain ATCC 47054 / DSM 6125 / CFBP 8728 / NCIMB 11950 / KT2440).